A 189-amino-acid chain; its full sequence is Autophagy receptor ATG45 (189 aa).

The interval Met-1–Asn-96 is binds glycogen. A required for sequestration into autophagosomes region spans residues Glu-97–Lys-189. Ser-107 bears the Phosphoserine mark. An ATG8 interaction motif (AIM) motif is present at residues Tyr-127–Leu-130. The residue at position 172 (Ser-172) is a Phosphoserine. Residues Leu-176–Trp-187 form a may facilitate interactions with the autophagosome membrane region.

As to quaternary structure, interacts with ATG8.

It localises to the cytoplasm. Its subcellular location is the cytosol. It is found in the cytoplasmic vesicle. The protein localises to the autophagosome. Its function is as follows. Autophagy receptor for glycogen that facilitates the sequestration of glycogen assemblies into autophagosomes as part of bulk autophagy; the autophagy of glycogen (glycophagy) is stimulated during prolonged nitrogen starvation and during sporulation. This chain is Autophagy receptor ATG45, found in Saccharomyces cerevisiae (strain ATCC 204508 / S288c) (Baker's yeast).